The primary structure comprises 322 residues: Extracellular metalloprotease AFUB_008060 (322 aa).

Residues methionine 1–alanine 22 form the signal peptide. 2 N-linked (GlcNAc...) asparagine glycosylation sites follow: asparagine 123 and asparagine 197. Histidine 233 lines the Zn(2+) pocket. Residue glutamate 234 is part of the active site. Histidine 237 contributes to the Zn(2+) binding site. Cysteine 272 and cysteine 299 form a disulfide bridge.

The protein belongs to the peptidase M43B family.

It is found in the secreted. In terms of biological role, secreted metalloproteinase that allows assimilation of proteinaceous substrates. Plays a pivotal role as a pathogenicity determinant during infections and contributes to the ability of the pathogen to persist within the mammalian host. The sequence is that of Extracellular metalloprotease AFUB_008060 from Aspergillus fumigatus (strain CBS 144.89 / FGSC A1163 / CEA10) (Neosartorya fumigata).